A 287-amino-acid polypeptide reads, in one-letter code: uncharacterized protein (287 aa).

Catalysis depends on charge relay system residues threonine 43 and tyrosine 104. The active-site Proton donor is tyrosine 130. Lysine 158 functions as the Schiff-base intermediate with substrate in the catalytic mechanism.

Belongs to the DapA family. As to quaternary structure, homotetramer.

Its subcellular location is the cytoplasm. This is an uncharacterized protein from Pyrococcus horikoshii (strain ATCC 700860 / DSM 12428 / JCM 9974 / NBRC 100139 / OT-3).